The sequence spans 88 residues: UPF0223 protein YktA (88 aa).

It belongs to the UPF0223 family.

The sequence is that of UPF0223 protein YktA (yktA) from Bacillus subtilis (strain 168).